We begin with the raw amino-acid sequence, 527 residues long: TnpB-like protein R854 (527 aa).

Residues 21–36 (GSKTKKKVFVKKKPPA) are compositionally biased toward basic residues. The disordered stretch occupies residues 21–50 (GSKTKKKVFVKKKPPAKKPPDKKPLKKTTK). C481, C484, C498, and C501 together coordinate Zn(2+).

This sequence in the central section; belongs to the transposase 2 family. In the C-terminal section; belongs to the transposase 35 family.

The chain is TnpB-like protein R854 from Acanthamoeba polyphaga mimivirus (APMV).